An 82-amino-acid polypeptide reads, in one-letter code: Cytochrome b559 subunit alpha (82 aa).

A helical membrane pass occupies residues 21-35 (VIHSVTIPSLFIAGW). H23 contacts heme.

Belongs to the PsbE/PsbF family. In terms of assembly, heterodimer of an alpha subunit and a beta subunit. PSII is composed of 1 copy each of membrane proteins PsbA, PsbB, PsbC, PsbD, PsbE, PsbF, PsbH, PsbI, PsbJ, PsbK, PsbL, PsbM, PsbT, PsbX, PsbY, PsbZ, Psb30/Ycf12, at least 3 peripheral proteins of the oxygen-evolving complex and a large number of cofactors. It forms dimeric complexes. Requires heme b as cofactor.

Its subcellular location is the plastid. The protein localises to the chloroplast thylakoid membrane. Functionally, this b-type cytochrome is tightly associated with the reaction center of photosystem II (PSII). PSII is a light-driven water:plastoquinone oxidoreductase that uses light energy to abstract electrons from H(2)O, generating O(2) and a proton gradient subsequently used for ATP formation. It consists of a core antenna complex that captures photons, and an electron transfer chain that converts photonic excitation into a charge separation. This is Cytochrome b559 subunit alpha from Ostreococcus tauri.